A 98-amino-acid polypeptide reads, in one-letter code: Large ribosomal subunit protein uL23 (98 aa).

The protein belongs to the universal ribosomal protein uL23 family. Part of the 50S ribosomal subunit. Contacts protein L29, and trigger factor when it is bound to the ribosome.

In terms of biological role, one of the early assembly proteins it binds 23S rRNA. One of the proteins that surrounds the polypeptide exit tunnel on the outside of the ribosome. Forms the main docking site for trigger factor binding to the ribosome. The polypeptide is Large ribosomal subunit protein uL23 (Cereibacter sphaeroides (strain ATCC 17029 / ATH 2.4.9) (Rhodobacter sphaeroides)).